Here is a 361-residue protein sequence, read N- to C-terminus: Porphobilinogen deaminase (361 aa).

N-acetylserine is present on serine 2. Serine 69 carries the phosphoserine modification. At lysine 74 the chain carries N6-acetyllysine. Residue serine 147 is modified to Phosphoserine. Cysteine 261 is modified (S-(dipyrrolylmethanemethyl)cysteine).

Belongs to the HMBS family. In terms of assembly, monomer. The cofactor is dipyrromethane.

The protein localises to the cytoplasm. It is found in the cytosol. The enzyme catalyses 4 porphobilinogen + H2O = hydroxymethylbilane + 4 NH4(+). The protein operates within porphyrin-containing compound metabolism; protoporphyrin-IX biosynthesis; coproporphyrinogen-III from 5-aminolevulinate: step 2/4. Its function is as follows. As part of the heme biosynthetic pathway, catalyzes the sequential polymerization of four molecules of porphobilinogen to form hydroxymethylbilane, also known as preuroporphyrinogen. Catalysis begins with the assembly of the dipyrromethane cofactor by the apoenzyme from two molecules of porphobilinogen or from preuroporphyrinogen. The covalently linked cofactor acts as a primer, around which the tetrapyrrole product is assembled. In the last step of catalysis, the product, preuroporphyrinogen, is released, leaving the cofactor bound to the holodeaminase intact. The sequence is that of Porphobilinogen deaminase (Hmbs) from Rattus norvegicus (Rat).